Consider the following 124-residue polypeptide: Urotensin-2 (124 aa).

A signal peptide spans 1–20 (MYKLASCCLLFIGFLNPLLS). A propeptide spanning residues 21–110 (LPLLDSREIS…HLLARIWKPY (90 aa)) is cleaved from the precursor. A disulfide bridge connects residues cysteine 118 and cysteine 123.

Belongs to the urotensin-2 family. Brain specific.

The protein resides in the secreted. In terms of biological role, highly potent vasoconstrictor. The polypeptide is Urotensin-2 (UTS2) (Homo sapiens (Human)).